The sequence spans 93 residues: Small ribosomal subunit protein uS19 (93 aa).

Positions glycine 72–lysine 93 are disordered. Positions tyrosine 80 to lysine 93 are enriched in basic residues.

The protein belongs to the universal ribosomal protein uS19 family.

Its function is as follows. Protein S19 forms a complex with S13 that binds strongly to the 16S ribosomal RNA. The sequence is that of Small ribosomal subunit protein uS19 from Aster yellows witches'-broom phytoplasma (strain AYWB).